Reading from the N-terminus, the 1249-residue chain is Cilia- and flagella-associated protein 57 (1249 aa).

WD repeat units lie at residues 105–148 (FQVQ…AIIK), 195–233 (GESS…WETS), 335–374 (SDKQ…ISKG), 386–425 (LHSA…LELY), 427–469 (EYQE…KEYS), 471–506 (RGCK…NINI), 509–548 (GHTG…RETE), and 635–674 (AHAG…GRGI). 2 coiled-coil regions span residues 690–1056 (KTDM…KTDL) and 1094–1165 (SDLQ…SALK).

The protein belongs to the CFAP57 family. As to quaternary structure, may form homodimers. Associates with components of the nexin-dynein regulatory complex (N-DRC) and the CFAP184:CFAP263 complex. Predominanly expressed in testis, lung and skin. Weak expression in brain and kidney.

The protein localises to the cytoplasm. It localises to the cytoskeleton. The protein resides in the cilium axoneme. Functionally, associates with components of the nexin-dynein regulatory complex (N-DRC), a key regulator of ciliary/flagellar motility, and might act as an inner dynein arm (IDA) hub or linkage. The chain is Cilia- and flagella-associated protein 57 from Mus musculus (Mouse).